An 882-amino-acid polypeptide reads, in one-letter code: Homeobox-leucine zipper protein ROC3 (882 aa).

A disordered region spans residues 104–144; it reads DVDDDHKPQHSGHDQPPDAAQPSGAAGGNAKKKRYHRHTAH. Residues 107 to 119 are compositionally biased toward basic and acidic residues; it reads DDHKPQHSGHDQP. Positions 133-143 are enriched in basic residues; that stretch reads AKKKRYHRHTA. A DNA-binding region (homeobox) is located at residues 134–193; that stretch reads KKKRYHRHTAHQIQQMEALFKECPHPDDKQRLKLSQELGLKPRQVKFWFQNRRTQMKAQQ. A coiled-coil region spans residues 200 to 263; the sequence is ILRAENENLK…LDRLACIATR (64 aa). The 245-residue stretch at 340 to 584 folds into the START domain; it reads QEQDKQLVVD…LQRQCERLAS (245 aa). Positions 782 to 816 are enriched in low complexity; that stretch reads AAAPTISSSTTTTTGNGNGETSSTPPRNSSSNNNN. Residues 782-820 form a disordered region; the sequence is AAAPTISSSTTTTTGNGNGETSSTPPRNSSSNNNNADEL.

The protein belongs to the HD-ZIP homeobox family. Class IV subfamily.

It is found in the nucleus. Its function is as follows. Probable transcription factor. The sequence is that of Homeobox-leucine zipper protein ROC3 (ROC3) from Oryza sativa subsp. indica (Rice).